Consider the following 292-residue polypeptide: WRKY transcription factor 55 (292 aa).

Residues 133-155 (VERSGASGSSTPRQRRRKDEGEE) form a disordered region. The WRKY DNA-binding region spans 167-235 (NTDLPPDDNH…YRGSHTCYNS (69 aa)).

Belongs to the WRKY group III family.

It is found in the nucleus. Transcription factor. Interacts specifically with the W box (5'-(T)TGAC[CT]-3'), a frequently occurring elicitor-responsive cis-acting element. This is WRKY transcription factor 55 (WRKY55) from Arabidopsis thaliana (Mouse-ear cress).